The chain runs to 151 residues: Large ribosomal subunit protein bL9 (151 aa).

It belongs to the bacterial ribosomal protein bL9 family.

In terms of biological role, binds to the 23S rRNA. This Chlorobium chlorochromatii (strain CaD3) protein is Large ribosomal subunit protein bL9.